The primary structure comprises 322 residues: ATP-dependent 6-phosphofructokinase (322 aa).

Gly-11 contacts ATP. 21-25 (RAVTR) contacts ADP. ATP is bound by residues 72-73 (RC) and 102-105 (GDGS). Asp-103 contributes to the Mg(2+) binding site. Position 127–129 (127–129 (TID)) interacts with substrate. Asp-129 serves as the catalytic Proton acceptor. Residue Arg-156 coordinates ADP. Substrate contacts are provided by residues Arg-164 and 171–173 (MGR). Residues 187 to 189 (GAE), Arg-213, and 215 to 217 (KKH) contribute to the ADP site. Substrate contacts are provided by residues Glu-224, Arg-245, and 251–254 (HIQR).

This sequence belongs to the phosphofructokinase type A (PFKA) family. ATP-dependent PFK group I subfamily. Prokaryotic clade 'B1' sub-subfamily. As to quaternary structure, homotetramer. Mg(2+) is required as a cofactor.

The protein resides in the cytoplasm. It carries out the reaction beta-D-fructose 6-phosphate + ATP = beta-D-fructose 1,6-bisphosphate + ADP + H(+). It functions in the pathway carbohydrate degradation; glycolysis; D-glyceraldehyde 3-phosphate and glycerone phosphate from D-glucose: step 3/4. Allosterically activated by ADP and other diphosphonucleosides, and allosterically inhibited by phosphoenolpyruvate. Its function is as follows. Catalyzes the phosphorylation of D-fructose 6-phosphate to fructose 1,6-bisphosphate by ATP, the first committing step of glycolysis. The polypeptide is ATP-dependent 6-phosphofructokinase (Staphylococcus epidermidis (strain ATCC 12228 / FDA PCI 1200)).